The following is a 124-amino-acid chain: UPF0102 protein Rcas_2007 (124 aa).

Belongs to the UPF0102 family.

The sequence is that of UPF0102 protein Rcas_2007 from Roseiflexus castenholzii (strain DSM 13941 / HLO8).